Here is a 241-residue protein sequence, read N- to C-terminus: Leucyl/phenylalanyl-tRNA--protein transferase (241 aa).

This sequence belongs to the L/F-transferase family.

It is found in the cytoplasm. It catalyses the reaction N-terminal L-lysyl-[protein] + L-leucyl-tRNA(Leu) = N-terminal L-leucyl-L-lysyl-[protein] + tRNA(Leu) + H(+). It carries out the reaction N-terminal L-arginyl-[protein] + L-leucyl-tRNA(Leu) = N-terminal L-leucyl-L-arginyl-[protein] + tRNA(Leu) + H(+). The enzyme catalyses L-phenylalanyl-tRNA(Phe) + an N-terminal L-alpha-aminoacyl-[protein] = an N-terminal L-phenylalanyl-L-alpha-aminoacyl-[protein] + tRNA(Phe). Functionally, functions in the N-end rule pathway of protein degradation where it conjugates Leu, Phe and, less efficiently, Met from aminoacyl-tRNAs to the N-termini of proteins containing an N-terminal arginine or lysine. This chain is Leucyl/phenylalanyl-tRNA--protein transferase, found in Neisseria meningitidis serogroup C (strain 053442).